The following is a 726-amino-acid chain: E3 SUMO-protein ligase SIZ2 (726 aa).

Positions 43–77 constitute an SAP domain; it reads MEQLKVLELKQICKSLDLSITGKKAVLQDRIKQFL. The PINIT domain occupies 139-291; the sequence is TALPPYSQQQ…SISCFIVEVF (153 aa). The segment at 323–408 adopts an SP-RING-type zinc-finger fold; the sequence is DDDDIITTST…IQNCNEDVEQ (86 aa). Residues cysteine 354, histidine 356, cysteine 377, and cysteine 380 each contribute to the Zn(2+) site. Residues 507–533 form a disordered region; the sequence is PSESEGSSDYNPNHTSTPKGSPTMDQD. Positions 510-533 are enriched in polar residues; the sequence is SEGSSDYNPNHTSTPKGSPTMDQD.

The protein belongs to the PIAS family. As to quaternary structure, interacts with CDC12. Post-translationally, autosumoylated upon ethanol stress.

The protein localises to the nucleus. It functions in the pathway protein modification; protein sumoylation. Its function is as follows. May act as an E3 ligase mediating SUMO/Smt3 attachment to septins. May be involved in chromosome maintenance. This is E3 SUMO-protein ligase SIZ2 (NFI1) from Saccharomyces cerevisiae (strain ATCC 204508 / S288c) (Baker's yeast).